Consider the following 422-residue polypeptide: Gamma-glutamyl phosphate reductase (422 aa).

Belongs to the gamma-glutamyl phosphate reductase family.

Its subcellular location is the cytoplasm. The enzyme catalyses L-glutamate 5-semialdehyde + phosphate + NADP(+) = L-glutamyl 5-phosphate + NADPH + H(+). The protein operates within amino-acid biosynthesis; L-proline biosynthesis; L-glutamate 5-semialdehyde from L-glutamate: step 2/2. Its function is as follows. Catalyzes the NADPH-dependent reduction of L-glutamate 5-phosphate into L-glutamate 5-semialdehyde and phosphate. The product spontaneously undergoes cyclization to form 1-pyrroline-5-carboxylate. The sequence is that of Gamma-glutamyl phosphate reductase from Chloroflexus aurantiacus (strain ATCC 29366 / DSM 635 / J-10-fl).